Here is a 200-residue protein sequence, read N- to C-terminus: Potassium-transporting ATPase KdpC subunit (200 aa).

Residues 13–33 form a helical membrane-spanning segment; the sequence is ITLIFWLITAIIYPLAILVVG.

This sequence belongs to the KdpC family. In terms of assembly, the system is composed of three essential subunits: KdpA, KdpB and KdpC.

It is found in the cell membrane. Its function is as follows. Part of the high-affinity ATP-driven potassium transport (or Kdp) system, which catalyzes the hydrolysis of ATP coupled with the electrogenic transport of potassium into the cytoplasm. This subunit acts as a catalytic chaperone that increases the ATP-binding affinity of the ATP-hydrolyzing subunit KdpB by the formation of a transient KdpB/KdpC/ATP ternary complex. The sequence is that of Potassium-transporting ATPase KdpC subunit from Anabaena sp. (strain L31).